The primary structure comprises 311 residues: Cytosolic Fe-S cluster assembly factor Nubp1 homolog (311 aa).

The interval 1 to 21 is disordered; it reads MQAPPPEHCPGVESEEAGKGS. 4 residues coordinate [4Fe-4S] cluster: Cys9, Cys23, Cys26, and Cys32. 63 to 70 contacts ATP; sequence GKGGVGKS. Cys240 and Cys243 together coordinate [4Fe-4S] cluster.

Belongs to the Mrp/NBP35 ATP-binding proteins family. NUBP1/NBP35 subfamily. As to quaternary structure, heterotetramer of 2 Nubp1 and 2 Nubp2 chains. Requires [4Fe-4S] cluster as cofactor.

The protein resides in the cytoplasm. Component of the cytosolic iron-sulfur (Fe/S) protein assembly (CIA) machinery. Required for maturation of extramitochondrial Fe-S proteins. The Nubp1-Nubp2 heterotetramer forms a Fe-S scaffold complex, mediating the de novo assembly of an Fe-S cluster and its transfer to target apoproteins. In Drosophila melanogaster (Fruit fly), this protein is Cytosolic Fe-S cluster assembly factor Nubp1 homolog.